Here is a 159-residue protein sequence, read N- to C-terminus: SsrA-binding protein (159 aa).

This sequence belongs to the SmpB family.

Its subcellular location is the cytoplasm. Its function is as follows. Required for rescue of stalled ribosomes mediated by trans-translation. Binds to transfer-messenger RNA (tmRNA), required for stable association of tmRNA with ribosomes. tmRNA and SmpB together mimic tRNA shape, replacing the anticodon stem-loop with SmpB. tmRNA is encoded by the ssrA gene; the 2 termini fold to resemble tRNA(Ala) and it encodes a 'tag peptide', a short internal open reading frame. During trans-translation Ala-aminoacylated tmRNA acts like a tRNA, entering the A-site of stalled ribosomes, displacing the stalled mRNA. The ribosome then switches to translate the ORF on the tmRNA; the nascent peptide is terminated with the 'tag peptide' encoded by the tmRNA and targeted for degradation. The ribosome is freed to recommence translation, which seems to be the essential function of trans-translation. This chain is SsrA-binding protein, found in Acidothermus cellulolyticus (strain ATCC 43068 / DSM 8971 / 11B).